The sequence spans 596 residues: Arginine--tRNA ligase (596 aa).

Residues 135–145 carry the 'HIGH' region motif; sequence ANPTGPIHIGG. Residues 227 to 249 are disordered; the sequence is PRVDGGADQDGNPLGEGDSEQRE.

The protein belongs to the class-I aminoacyl-tRNA synthetase family. As to quaternary structure, monomer.

Its subcellular location is the cytoplasm. It catalyses the reaction tRNA(Arg) + L-arginine + ATP = L-arginyl-tRNA(Arg) + AMP + diphosphate. This Bifidobacterium adolescentis (strain ATCC 15703 / DSM 20083 / NCTC 11814 / E194a) protein is Arginine--tRNA ligase.